The sequence spans 238 residues: SH2 domain-containing adapter protein F (238 aa).

2 disordered regions span residues 1 to 70 (MEPY…PWEW) and 85 to 121 (GSEN…EPSS). S39 bears the Phosphoserine mark. The span at 55–66 (EDDERPPEEYDQ) shows a compositional bias: acidic residues. Phosphotyrosine is present on Y64. In terms of domain architecture, SH2 spans 138–233 (WYHGAISRTD…AEHMSLLYPV (96 aa)).

As to quaternary structure, interacts with phosphorylated 'Tyr-720' of PDGFRA via its SH2 domain. May become phosphorylated upon binding to PDGFRA.

Adapter protein which may play a role in the regulation of apoptosis in response to PDGF. The sequence is that of SH2 domain-containing adapter protein F from Mus musculus (Mouse).